The sequence spans 367 residues: Damage-control phosphatase At2g17340 (367 aa).

N-acetylmethionine is present on M1. Residues D220, N221, and D256 each contribute to the Mn(2+) site. The short motif at 318–322 (EGMGR) is the Subfamily II EGMGR motif element.

This sequence belongs to the damage-control phosphatase family. Phosphopantetheine phosphatase II subfamily. In terms of assembly, multimer. The cofactor is Mn(2+). Requires Ni(2+) as cofactor.

Activity is strongly promoted by Co(2+), Ni(2+), Mg(2+), Cu(2+) and Mn(2+). Activity is inhibited by EDTA. Its function is as follows. Metal-dependent phosphatase with probable damage-control functions. Shows phosphatase activity against several substrates, including sugar phosphates and p-nitrophenyl phosphate(pNPP). Prefers sugar phosphate substrates, including the extremely potent glycating agents ribose-5-phosphate and erythrose-4-phosphate. The chain is Damage-control phosphatase At2g17340 from Arabidopsis thaliana (Mouse-ear cress).